The sequence spans 309 residues: Dehydrogenase/reductase SDR family member 7B (309 aa).

Residues 1-5 (MERAL) are Cytoplasmic-facing. Residues 6-26 (GVGIGPLAAGTVGLLILLKVI) form a helical; Signal-anchor for type II membrane protein membrane-spanning segment. The Lumenal portion of the chain corresponds to 27–271 (QRLRRRPNIQ…LKAVCQKKKD (245 aa)). NAD(+)-binding residues include Ser47 and Leu49. Ser179 provides a ligand contact to substrate. 3 residues coordinate NAD(+): Tyr192, Lys196, and Thr227. The Proton acceptor role is filled by Tyr192.

It belongs to the short-chain dehydrogenases/reductases (SDR) family.

Its subcellular location is the endoplasmic reticulum membrane. Its function is as follows. Putative oxidoreductase. This chain is Dehydrogenase/reductase SDR family member 7B (dhrs7b), found in Danio rerio (Zebrafish).